Reading from the N-terminus, the 492-residue chain is MAKFIMVVGTSSNSGKTVLVSGICRMLSNKGYKVAPFKSQNMSLNSRVSIEDGEIAVAQYTQAMAARSEPSVHFNPILLKPKGNFVSQVIVHGIPYEDRDYNEYRSKKDDFLDKIKQSINYLDKNYDYVVIEGAGSCCEINLLKDDIANLRVAEIAGADAILVSDIDRGGVFASIYGTVQLLPENWRNLLKGFVINKFRGNIDVLKDGFEKIEELTKIPVIGTILYDETLILPEEDSQALEGKRVFGNVKSPIEVNIVKFSKIANFTDVDPLSSDCLMKYIDFNDDITGDILILPGTRCSTVEMDLMKKHGLDKKILEFVENGGIVLGICGGYQTLGKMLIDEDFSEGDIGTISGLGLFDMETTFGNEKAIKNSTGTISIFDQNFNVTGYELHEGHSVSNETPLISLSRGFGNCGDSYDGSFKIIGNSYIFGTYFHGILENFEFRNYLVNFVRHKKNLSKIENDNYAEIFNENMDKLSKLVEESLDLSKIIK.

Residues 252-444 form the GATase cobBQ-type domain; the sequence is PIEVNIVKFS…FHGILENFEF (193 aa). C330 functions as the Nucleophile in the catalytic mechanism. The active site involves H436.

Belongs to the CobB/CobQ family. CobQ subfamily.

The protein operates within cofactor biosynthesis; adenosylcobalamin biosynthesis. Its function is as follows. Catalyzes amidations at positions B, D, E, and G on adenosylcobyrinic A,C-diamide. NH(2) groups are provided by glutamine, and one molecule of ATP is hydrogenolyzed for each amidation. This chain is Probable cobyric acid synthase, found in Methanococcus maripaludis (strain C5 / ATCC BAA-1333).